Reading from the N-terminus, the 366-residue chain is S-adenosylmethionine synthase 1 (366 aa).

A K(+)-binding site is contributed by E18. Residues E31 and Q74 each contribute to the L-methionine site. Residues 142–144, 210–213, D221, 227–228, A244, K248, and K252 contribute to the ATP site; these read DGN, SGRF, and RK. D221 is a binding site for L-methionine. An L-methionine-binding site is contributed by K252.

It belongs to the AdoMet synthase family. As to quaternary structure, homotetramer. Requires Mn(2+) as cofactor. The cofactor is Mg(2+). Co(2+) is required as a cofactor. K(+) serves as cofactor.

Its subcellular location is the cytoplasm. The enzyme catalyses L-methionine + ATP + H2O = S-adenosyl-L-methionine + phosphate + diphosphate. It participates in amino-acid biosynthesis; S-adenosyl-L-methionine biosynthesis; S-adenosyl-L-methionine from L-methionine: step 1/1. Catalyzes the formation of S-adenosylmethionine from methionine and ATP. The reaction comprises two steps that are both catalyzed by the same enzyme: formation of S-adenosylmethionine (AdoMet) and triphosphate, and subsequent hydrolysis of the triphosphate. This chain is S-adenosylmethionine synthase 1 (SAMS1), found in Pisum sativum (Garden pea).